Consider the following 377-residue polypeptide: Histone deacetylase 8 (377 aa).

A histone deacetylase region spans residues 14–324; that stretch reads LPPVYIYSPE…WTYLTGVILG (311 aa). The residue at position 39 (S39) is a Phosphoserine. D101 is a binding site for substrate. The active-site Proton acceptor is the H143. A substrate-binding site is contributed by G151. Positions 178, 180, and 267 each coordinate a divalent metal cation. Substrate is bound at residue Y306.

This sequence belongs to the histone deacetylase family. HD type 1 subfamily. As to quaternary structure, interacts with CBFA2T3. Interacts with phosphorylated SMG5/EST1B; this interaction protects SMG5 from ubiquitin-mediated degradation. Associates with alpha-SMA (smooth muscle alpha-actin). A divalent metal cation is required as a cofactor. Phosphorylated by PKA on serine 39. Phosphorylation reduces deacetylase activity observed preferentially on histones H3 and H4.

Its subcellular location is the nucleus. It is found in the chromosome. It localises to the cytoplasm. The catalysed reaction is N(6)-acetyl-L-lysyl-[histone] + H2O = L-lysyl-[histone] + acetate. It carries out the reaction N(6)-acetyl-L-lysyl-[protein] + H2O = L-lysyl-[protein] + acetate. The enzyme catalyses N(6)-(2E)-butenoyl-L-lysyl-[protein] + H2O = (2E)-2-butenoate + L-lysyl-[protein]. Its activity is inhibited by trichostatin A (TSA) and butyrate, 2 well known histone deacetylase inhibitors. Histone deacetylase that catalyzes the deacetylation of lysine residues on the N-terminal part of the core histones (H2A, H2B, H3 and H4). Histone deacetylation gives a tag for epigenetic repression and plays an important role in transcriptional regulation, cell cycle progression and developmental events. Histone deacetylases act via the formation of large multiprotein complexes. Also involved in the deacetylation of cohesin complex protein SMC3 regulating release of cohesin complexes from chromatin. May play a role in smooth muscle cell contractility. In addition to protein deacetylase activity, also has protein-lysine deacylase activity: acts as a protein decrotonylase by mediating decrotonylation ((2E)-butenoyl) of histones. This Rattus norvegicus (Rat) protein is Histone deacetylase 8 (Hdac8).